The chain runs to 336 residues: Vomeronasal type-1 receptor 102 (336 aa).

Topologically, residues 1–42 (MVGVQICQGMTSEILFFSLQPQFSNMMNKNSRLHIDSNIRNT) are extracellular. A helical membrane pass occupies residues 43 to 63 (FFTEIGIGVSANSLLLLFNIF). The Cytoplasmic portion of the chain corresponds to 64 to 75 (KFIHGQRSRLTD). Residues 76–96 (LPIGLLSLINLLMLLIMACIA) form a helical membrane-spanning segment. Topologically, residues 97 to 120 (TDIFISCRRWDDIICKSLLYLYRT) are extracellular. A disulfide bridge links cysteine 111 with cysteine 198. A helical membrane pass occupies residues 121-140 (FRGLSLSTTCLLSVLQAIIL). At 141–157 (SPRSSCLAKYKHKPPHH) the chain is on the cytoplasmic side. Residues 158-178 (IFCAMLFLSVLYMFISSHLLL) traverse the membrane as a helical segment. Residues 179–213 (SIIATPNLTTNDFIHVSQSCSILPMSYLMQSMFST) are Extracellular-facing. Asparagine 185 carries an N-linked (GlcNAc...) asparagine glycan. Residues 214–234 (LLAIRNVFLISLIVLSTWYMV) traverse the membrane as a helical segment. The Cytoplasmic portion of the chain corresponds to 235–264 (ALLCRHRKQTRHLQDTSLSRKASPEQRATR). Residues 265 to 285 (SILMLRSLFVLMSIFDSIVSC) traverse the membrane as a helical segment. At 286-296 (SRTMYLNDPTS) the chain is on the extracellular side. A helical membrane pass occupies residues 297–317 (YSIQLLVVHIYATVSPFVFMI). The Cytoplasmic segment spans residues 318 to 336 (TEKHIVNYLKSMYVRVLNV).

Belongs to the G-protein coupled receptor 1 family. As to expression, expressed in 1-4% of neurons of the vomeronasal organ. Only one pheromone receptor gene may be expressed in a particular neuron. Not expressed in the main olfactory epithelium.

It is found in the cell membrane. Putative pheromone receptor implicated in the regulation of social as well as reproductive behavior. This Rattus norvegicus (Rat) protein is Vomeronasal type-1 receptor 102 (Vom1r102).